A 708-amino-acid polypeptide reads, in one-letter code: Exocyst complex component 8 (708 aa).

In terms of domain architecture, PH spans 168–268 (YLVYNGDLLE…WLEVLEETKR (101 aa)). Residues 271–282 (ALSEKRRLEQEA) are compositionally biased toward basic and acidic residues. The tract at residues 271–314 (ALSEKRRLEQEALPRPAPTPPESTNPFEEEEEEEEEPSAEEEAV) is disordered. Acidic residues predominate over residues 297–314 (FEEEEEEEEEPSAEEEAV).

The protein belongs to the EXO84 family. In terms of assembly, the exocyst complex is composed of EXOC1, EXOC2, EXOC3, EXOC4, EXOC5, EXOC6, EXOC7 and EXOC8.

Its subcellular location is the cytoplasm. It localises to the perinuclear region. The protein resides in the cell projection. The protein localises to the growth cone. Component of the exocyst complex involved in the docking of exocytic vesicles with fusion sites on the plasma membrane. In Gallus gallus (Chicken), this protein is Exocyst complex component 8 (EXOC8).